A 504-amino-acid polypeptide reads, in one-letter code: Protein DETOXIFICATION 38 (504 aa).

12 consecutive transmembrane segments (helical) span residues L56–I76, L90–M110, I139–L159, Y170–F190, I208–G228, I234–I254, G273–T295, S316–V336, T356–A376, F401–G421, I433–F453, and G457–T477.

It belongs to the multi antimicrobial extrusion (MATE) (TC 2.A.66.1) family.

Its subcellular location is the membrane. This chain is Protein DETOXIFICATION 38, found in Arabidopsis thaliana (Mouse-ear cress).